A 99-amino-acid polypeptide reads, in one-letter code: NADH dehydrogenase [ubiquinone] 1 alpha subcomplex subunit 2 (99 aa).

N-acetylalanine is present on A2. A disulfide bond links C24 and C58. K64 carries the N6-acetyllysine; alternate modification. N6-succinyllysine; alternate is present on K64. The residue at position 75 (K75) is an N6-acetyllysine.

Belongs to the complex I NDUFA2 subunit family. As to quaternary structure, complex I is composed of 45 different subunits.

It is found in the mitochondrion inner membrane. Functionally, accessory subunit of the mitochondrial membrane respiratory chain NADH dehydrogenase (Complex I), that is believed not to be involved in catalysis. Complex I functions in the transfer of electrons from NADH to the respiratory chain. The immediate electron acceptor for the enzyme is believed to be ubiquinone. The protein is NADH dehydrogenase [ubiquinone] 1 alpha subcomplex subunit 2 (NDUFA2) of Bos taurus (Bovine).